The following is a 599-amino-acid chain: Dictomallein-2 (599 aa).

Residues 1–20 (MKLILIYLILVFNLFNFINC) form the signal peptide. Positions 145–407 (PDVGQDYTLK…QNYFKNSIYY (263 aa)) constitute a Peptidase M66 domain. A Zn(2+)-binding site is contributed by His-298. Glu-299 is an active-site residue. Zn(2+) contacts are provided by His-302 and His-308.

It belongs to the dictomallein family. It depends on Zn(2+) as a cofactor.

The protein localises to the secreted. The chain is Dictomallein-2 (dtmlB) from Dictyostelium discoideum (Social amoeba).